The chain runs to 85 residues: Large ribosomal subunit protein bL31B (85 aa).

The protein belongs to the bacterial ribosomal protein bL31 family. Type B subfamily. In terms of assembly, part of the 50S ribosomal subunit.

This chain is Large ribosomal subunit protein bL31B, found in Macrococcus caseolyticus (strain JCSC5402) (Macrococcoides caseolyticum).